The primary structure comprises 291 residues: Phosphatidylglycerol--prolipoprotein diacylglyceryl transferase (291 aa).

The next 7 helical transmembrane spans lie at 21–41 (VALH…MWLA), 60–80 (LLYA…VLFY), 96–116 (WDGG…MIIF), 130–150 (FIAP…FING), 198–218 (SQLY…NLFI), 225–245 (GAVS…VEFF), and 260–280 (ISMG…MMVW). Residue arginine 143 coordinates a 1,2-diacyl-sn-glycero-3-phospho-(1'-sn-glycerol).

The protein belongs to the Lgt family.

It is found in the cell inner membrane. It carries out the reaction L-cysteinyl-[prolipoprotein] + a 1,2-diacyl-sn-glycero-3-phospho-(1'-sn-glycerol) = an S-1,2-diacyl-sn-glyceryl-L-cysteinyl-[prolipoprotein] + sn-glycerol 1-phosphate + H(+). The protein operates within protein modification; lipoprotein biosynthesis (diacylglyceryl transfer). In terms of biological role, catalyzes the transfer of the diacylglyceryl group from phosphatidylglycerol to the sulfhydryl group of the N-terminal cysteine of a prolipoprotein, the first step in the formation of mature lipoproteins. This is Phosphatidylglycerol--prolipoprotein diacylglyceryl transferase from Salmonella newport (strain SL254).